Reading from the N-terminus, the 384-residue chain is Prostaglandin E synthase 2 (384 aa).

Residues 1–56 (MAQAARLSWVLVSSRCALTEGLLTRPWQPLSAQSRAGFTRVAAGSRGAAVRKGSPR) lie on the Lumenal side of the membrane. A helical transmembrane segment spans residues 57–73 (LLGAAALALGGALGLYH). Over 74 to 384 (TVRWHQRSQD…VHHVNPSCKD (311 aa)) the chain is Cytoplasmic. In terms of domain architecture, Glutaredoxin spans 89 to 192 (SAAQLPLSNS…EVITYYPPMK (104 aa)). Residues Val147 and 163–164 (DS) contribute to the glutathione site. Residues 262–376 (YIVREGKFGA…RAIEEAPSVH (115 aa)) enclose the GST C-terminal domain.

The protein belongs to the GST superfamily. Homodimer. Interacts with EXOSC10. May interact with CEBPB. Post-translationally, synthesized as a Golgi membrane-associated protein, and the proteolytic removal of the N-terminal hydrophobic domain leads to the formation of a mature cytosolic enzyme. Widely expressed. Expressed in brain, heart, liver, colon and lung.

The protein resides in the golgi apparatus membrane. It localises to the nucleus. The protein localises to the cytoplasm. The catalysed reaction is prostaglandin H2 = prostaglandin E2. It carries out the reaction prostaglandin H2 = (12S)-hydroxy-(5Z,8E,10E)-heptadecatrienoate + malonaldehyde. Its pathway is lipid metabolism; prostaglandin biosynthesis. With respect to regulation, isomerase activity is increased by sulfhydril compounds. Dithiothreitol (DTT) is most effective, followed by glutathione (GSH) and 2-mercaptoethanol. Its function is as follows. Isomerase that catalyzes the conversion of PGH2 into the more stable prostaglandin E2 (PGE2) (in vitro). The biological function and the GSH-dependent property of PTGES2 is still under debate. In vivo, PTGES2 could form a complex with GSH and heme and would not participate in PGE2 synthesis but would catalyze the degradation of prostaglandin E2 H2 (PGH2) to 12(S)-hydroxy-5(Z),8(E),10(E)-heptadecatrienoic acid (HHT) and malondialdehyde (MDA). May also have transactivation activity toward IFN-gamma (IFNG), possibly via an interaction with CEBPB; however, the relevance of transcription activation activity remains unclear. This is Prostaglandin E synthase 2 (Ptges2) from Mus musculus (Mouse).